We begin with the raw amino-acid sequence, 239 residues long: Methylthioribulose-1-phosphate dehydratase (239 aa).

Position 94 (Cys-94) interacts with substrate. Positions 112 and 114 each coordinate Zn(2+). Residue Glu-136 is the Proton donor/acceptor of the active site. Zn(2+) is bound at residue His-192.

It belongs to the aldolase class II family. MtnB subfamily. Zn(2+) is required as a cofactor.

It is found in the cytoplasm. It catalyses the reaction 5-(methylsulfanyl)-D-ribulose 1-phosphate = 5-methylsulfanyl-2,3-dioxopentyl phosphate + H2O. Its pathway is amino-acid biosynthesis; L-methionine biosynthesis via salvage pathway; L-methionine from S-methyl-5-thio-alpha-D-ribose 1-phosphate: step 2/6. Its function is as follows. Catalyzes the dehydration of methylthioribulose-1-phosphate (MTRu-1-P) into 2,3-diketo-5-methylthiopentyl-1-phosphate (DK-MTP-1-P). Functions in the methionine salvage pathway. May play a role in apoptosis. The chain is Methylthioribulose-1-phosphate dehydratase from Aquarana catesbeiana (American bullfrog).